We begin with the raw amino-acid sequence, 273 residues long: Epidermal growth factor-like protein 7 (273 aa).

The first 23 residues, 1 to 23 (MRGSQEVLLMWLLVLAVGGTEHA), serve as a signal peptide directing secretion. Positions 27 to 104 (GRRVCAVRAH…TSGLPGACGA (78 aa)) constitute an EMI domain. 9 disulfide bridges follow: C31-C89, C56-C62, C88-C102, C107-C117, C111-C123, C125-C134, C141-C152, C148-C161, and C163-C176. Residues 103 to 135 (GAAICQPPCRNGGSCVQPGRCRCPAGWRGDTCQ) form the EGF-like 1 domain. The Cell attachment site signature appears at 130–132 (RGD). Residues 137–177 (DVDECSARRGGCPQRCVNTAGSYWCQCWEGHSLSADGTLCV) enclose the EGF-like 2; calcium-binding domain. Residues 192-219 (VDSAMKEEVQRLQSRVDLLEEKLQLVLA) are a coiled coil.

In terms of assembly, interacts with ITGAV/ITGB3 in an RGD-dependent manner, increasing endothelial cell's motility.

It is found in the secreted. The protein resides in the extracellular space. Regulates vascular tubulogenesis in vivo. Inhibits platelet-derived growth factor (PDGF)-BB-induced smooth muscle cell migration and promotes endothelial cell adhesion to the extracellular matrix and angiogenesis. The chain is Epidermal growth factor-like protein 7 (EGFL7) from Homo sapiens (Human).